The chain runs to 351 residues: N-acetyl-gamma-glutamyl-phosphate reductase (351 aa).

C154 is a catalytic residue.

It belongs to the NAGSA dehydrogenase family. Type 1 subfamily.

The protein localises to the cytoplasm. It catalyses the reaction N-acetyl-L-glutamate 5-semialdehyde + phosphate + NADP(+) = N-acetyl-L-glutamyl 5-phosphate + NADPH + H(+). The protein operates within amino-acid biosynthesis; L-arginine biosynthesis; N(2)-acetyl-L-ornithine from L-glutamate: step 3/4. In terms of biological role, catalyzes the NADPH-dependent reduction of N-acetyl-5-glutamyl phosphate to yield N-acetyl-L-glutamate 5-semialdehyde. This chain is N-acetyl-gamma-glutamyl-phosphate reductase, found in Prochlorococcus marinus subsp. pastoris (strain CCMP1986 / NIES-2087 / MED4).